The sequence spans 177 residues: Translation initiation factor IF-3 (177 aa).

The protein belongs to the IF-3 family. As to quaternary structure, monomer.

The protein localises to the cytoplasm. IF-3 binds to the 30S ribosomal subunit and shifts the equilibrium between 70S ribosomes and their 50S and 30S subunits in favor of the free subunits, thus enhancing the availability of 30S subunits on which protein synthesis initiation begins. The polypeptide is Translation initiation factor IF-3 (Acaryochloris marina (strain MBIC 11017)).